The following is a 302-amino-acid chain: Probable alpha-L-glutamate ligase (302 aa).

The region spanning 104–287 (MQLLSREGVG…VAGMIIEFIE (184 aa)) is the ATP-grasp domain. ATP contacts are provided by residues lysine 141, 178–179 (EF), aspartate 187, and 211–213 (RSN). Positions 248, 260, and 262 each coordinate Mg(2+). 3 residues coordinate Mn(2+): aspartate 248, glutamate 260, and asparagine 262.

Belongs to the RimK family. It depends on Mg(2+) as a cofactor. Mn(2+) serves as cofactor.

The polypeptide is Probable alpha-L-glutamate ligase (Halorhodospira halophila (strain DSM 244 / SL1) (Ectothiorhodospira halophila (strain DSM 244 / SL1))).